The following is a 252-amino-acid chain: Diphthine synthase (252 aa).

S-adenosyl-L-methionine contacts are provided by residues L9, D85, V88, S113–I114, L165, A202, and H227.

It belongs to the diphthine synthase family. In terms of assembly, homodimer.

It catalyses the reaction 2-[(3S)-amino-3-carboxypropyl]-L-histidyl-[translation elongation factor 2] + 3 S-adenosyl-L-methionine = diphthine-[translation elongation factor 2] + 3 S-adenosyl-L-homocysteine + 3 H(+). The protein operates within protein modification; peptidyl-diphthamide biosynthesis. S-adenosyl-L-methionine-dependent methyltransferase that catalyzes the trimethylation of the amino group of the modified target histidine residue in translation elongation factor 2 (EF-2), to form an intermediate called diphthine. The three successive methylation reactions represent the second step of diphthamide biosynthesis. The sequence is that of Diphthine synthase from Methanospirillum hungatei JF-1 (strain ATCC 27890 / DSM 864 / NBRC 100397 / JF-1).